Consider the following 476-residue polypeptide: Transcription factor HBP-1b(c1) (476 aa).

3 disordered regions span residues 1–29, 133–159, and 171–207; these read ESRR…FGAP, HNND…PDID, and QLAA…RKSR. Positions 10-25 are enriched in low complexity; that stretch reads AAAAAAAGDPRGPMPG. The span at 135–144 shows a compositional bias: polar residues; the sequence is NDNWGESSMA. A compositionally biased stretch (basic and acidic residues) spans 180–191; that stretch reads SSDKSRDKLDHK. Positions 189 to 252 constitute a bZIP domain; sequence DHKSLRRLAQ…SSGDQSQSAS (64 aa). A basic motif region spans residues 191–211; the sequence is KSLRRLAQNREAARKSRLRKK. Positions 201-242 form a coiled coil; that stretch reads EAARKSRLRKKAYIQNLESSRLKLTQLEQELQRARQQGIFIS. Residues 217-231 are leucine-zipper; that stretch reads LESSRLKLTQLEQEL. The 218-residue stretch at 256–473 folds into the DOG1 domain; sequence AVAFDMEYAR…RALSSLWLAR (218 aa).

This sequence belongs to the bZIP family. Binds DNA as a dimer.

The protein localises to the nucleus. Transcriptional activator that binds specifically to the DNA sequence 5'-TGACG-3'. Recognizes ocs elements like the as-1 motif of the cauliflower mosaic virus 35S promoter. Binding to the as-1-like cis elements mediate auxin- and salicylic acid-inducible transcription. Binds to the hexamer motif 5'-ACGTCA-3' of histone gene promoters. This Triticum aestivum (Wheat) protein is Transcription factor HBP-1b(c1).